A 359-amino-acid chain; its full sequence is 3-dehydroquinate synthase (359 aa).

Residues 72-77 (EGEIHK), 106-110 (GVIGD), 130-131 (TS), Lys-143, Lys-152, and 170-173 (CLKT) each bind NAD(+). Zn(2+) is bound by residues Glu-185, His-248, and His-264.

Belongs to the sugar phosphate cyclases superfamily. Dehydroquinate synthase family. Co(2+) serves as cofactor. The cofactor is Zn(2+). NAD(+) is required as a cofactor.

It localises to the cytoplasm. It carries out the reaction 7-phospho-2-dehydro-3-deoxy-D-arabino-heptonate = 3-dehydroquinate + phosphate. It functions in the pathway metabolic intermediate biosynthesis; chorismate biosynthesis; chorismate from D-erythrose 4-phosphate and phosphoenolpyruvate: step 2/7. Catalyzes the conversion of 3-deoxy-D-arabino-heptulosonate 7-phosphate (DAHP) to dehydroquinate (DHQ). The protein is 3-dehydroquinate synthase of Dehalococcoides mccartyi (strain ATCC BAA-2266 / KCTC 15142 / 195) (Dehalococcoides ethenogenes (strain 195)).